The sequence spans 235 residues: MSWRGSGRSNFRSRSSSNGGSTFSGGSAGGPPLIVMMGLAFGAGLIMLIVMIASNATAGGFVAATPRPTATPRPTAAPAPTQPPAAQPTTAPATQAANAPGGSNVVNETPAQTVEVRAAPDALAFAQTSLSLPANTVVRLDFVNQNNLGVQHNWVLVNGGDDVAAAVNTAAQNNADALFVPPPDTPNALAWTAMLNAGESGSVTFRTPAPGTYLYICTFPGHYLAGMKGTLTVTP.

Residues 1–21 are compositionally biased toward low complexity; the sequence is MSWRGSGRSNFRSRSSSNGGS. Disordered stretches follow at residues 1–27 and 64–107; these read MSWR…SGGS and ATPR…NVVN. Residues 1-56 form the signal peptide; sequence MSWRGSGRSNFRSRSSSNGGSTFSGGSAGGPPLIVMMGLAFGAGLIMLIVMIASNA. Residues 57–80 constitute a propeptide that is removed on maturation; that stretch reads TAGGFVAATPRPTATPRPTAAPAP. Residues 69–86 show a composition bias toward pro residues; it reads TATPRPTAAPAPTQPPAA. The segment covering 87–100 has biased composition (low complexity); sequence QPTTAPATQAANAP. One can recognise a Plastocyanin-like domain in the interval 111-235; that stretch reads AQTVEVRAAP…GMKGTLTVTP (125 aa). Histidine 152, cysteine 217, histidine 222, and methionine 227 together coordinate Cu cation.

The protein belongs to the multicopper oxidase family. Requires Cu cation as cofactor. Post-translationally, glycosylated.

Its subcellular location is the cell membrane. Probably a soluble electron acceptor for the integral membrane protein electron transfer alternative complex III (ACIII). This chain is Auracyanin-B, found in Chloroflexus aurantiacus (strain ATCC 29366 / DSM 635 / J-10-fl).